The chain runs to 703 residues: Meiotic coiled-coil protein 2 (703 aa).

Composition is skewed to polar residues over residues Met-1 to Glu-19 and Thr-245 to Leu-258. Disordered stretches follow at residues Met-1–Asn-29, Thr-245–Leu-265, and Ala-284–Ser-309. In terms of domain architecture, PUM-HD spans Asn-331–Asn-686. 8 Pumilio repeats span residues Asn-361–Asp-396, Ser-397–Ser-432, Ala-433–Asp-468, Glu-469–Asn-504, Ala-509–Glu-544, Glu-545–Asp-580, Ala-581–Lys-616, and Arg-625–Thr-660.

The protein is Meiotic coiled-coil protein 2 (mcp2) of Schizosaccharomyces pombe (strain 972 / ATCC 24843) (Fission yeast).